The following is a 179-amino-acid chain: Large ribosomal subunit protein uL5 (179 aa).

The protein belongs to the universal ribosomal protein uL5 family. In terms of assembly, part of the 50S ribosomal subunit; part of the 5S rRNA/L5/L18/L25 subcomplex. Contacts the 5S rRNA and the P site tRNA. Forms a bridge to the 30S subunit in the 70S ribosome.

Its function is as follows. This is one of the proteins that bind and probably mediate the attachment of the 5S RNA into the large ribosomal subunit, where it forms part of the central protuberance. In the 70S ribosome it contacts protein S13 of the 30S subunit (bridge B1b), connecting the 2 subunits; this bridge is implicated in subunit movement. Contacts the P site tRNA; the 5S rRNA and some of its associated proteins might help stabilize positioning of ribosome-bound tRNAs. This is Large ribosomal subunit protein uL5 from Verminephrobacter eiseniae (strain EF01-2).